Reading from the N-terminus, the 407-residue chain is Homeobox even-skipped homolog protein 1 (407 aa).

2 disordered regions span residues 29–120 (EAVG…SDFY) and 137–179 (EYQH…ACSA). The span at 102-114 (DSLSGQGQPSSSD) shows a compositional bias: polar residues. The homeobox DNA-binding region spans 183-242 (MRRYRTAFTREQIARLEKEFYRENYVSRPRRCELAAALNLPETTIKVWFQNRRMKDKRQR).

Belongs to the even-skipped homeobox family.

It localises to the nucleus. May play a role in the specification of neuronal cell types. The sequence is that of Homeobox even-skipped homolog protein 1 (EVX1) from Homo sapiens (Human).